Reading from the N-terminus, the 313-residue chain is Probable cell division protein WhiA (313 aa).

A DNA-binding region (H-T-H motif) is located at residues 277–311; that stretch reads SLKEVAAQVPDGPISKSGVNHRFQKIREMAQQLKE.

The protein belongs to the WhiA family.

Functionally, involved in cell division and chromosome segregation. The protein is Probable cell division protein WhiA of Lactobacillus gasseri (strain ATCC 33323 / DSM 20243 / BCRC 14619 / CIP 102991 / JCM 1131 / KCTC 3163 / NCIMB 11718 / NCTC 13722 / AM63).